A 7059-amino-acid polypeptide reads, in one-letter code: Replicase polyprotein 1ab (7059 aa).

A CoV Nsp1 globular domain is found at 54-196; the sequence is PENHVMVDCR…PWVMYLRKCG (143 aa). The region spanning 216 to 246 is the BetaCoV Nsp1 C-terminal domain; sequence FKVEDAYDLVHDEPKGKFSKKAYALIRGYRG. In terms of domain architecture, CoV Nsp2 N-terminal spans 250-519; sequence LLYVDQYGCD…LICKALYLDY (270 aa). Zn(2+) is bound by residues Cys392, Cys397, Cys413, and Cys416. The C4 stretch occupies residues 392-416; the sequence is CEQDLCDFKGWVPGNMIDGFACTTC. In terms of domain architecture, CoV Nsp2 middle spans 524-713; sequence CGNLHQRELL…AQAFRSGAKV (190 aa). The region spanning 733 to 851 is the CoV Nsp2 C-terminal domain; the sequence is RRRICLSGSK…LDQAWRVPCA (119 aa). The Ubiquitin-like 1 domain maps to 853–966; the sequence is RCVTFKEQPT…LYCAFTAPED (114 aa). A compositionally biased stretch (acidic residues) spans 972-986; sequence ESGVEEDDVEGEETD. The interval 972–1000 is disordered; it reads ESGVEEDDVEGEETDLTVTSAGEPCVASE. Residues 1036–1274 enclose the Peptidase C16 1 domain; the sequence is DLESVIQDYE…IAQLYGSCIT (239 aa). Catalysis depends on Cys1074, which acts as the For PL1-PRO activity. The Zn(2+) site is built by Cys1151, Cys1154, Cys1177, and Cys1179. The segment at 1151-1179 adopts a C4-type 1 zinc-finger fold; sequence CIKCDLALKLKGLDAMFFYGDVVSHVCKC. Residues His1225 and Asp1236 each act as for PL1-PRO activity in the active site. Positions 1275–1435 constitute a Macro domain; the sequence is PNVCFVKGDI…LISKCQITAV (161 aa). One can recognise a DPUP domain in the interval 1491–1563; that stretch reads DDARTFVQSN…VAQIKALFLD (73 aa). One can recognise a Ubiquitin-like 2 domain in the interval 1562 to 1617; the sequence is LDKVDILLTVDGVNFTNRFVPVGESFGKSLGNVFCDGVNVTKHKCDINYKGKVFFQ. Residues 1631–1892 enclose the Peptidase C16 2 domain; sequence SSFNFDQKEL…KIEYKPDLSQ (262 aa). Cys1671 acts as the For PL2-PRO activity in catalysis. The Zn(2+) site is built by Cys1749, Cys1751, Cys1783, and Cys1785. The segment at 1749 to 1785 adopts a C4-type 2 zinc-finger fold; the sequence is CKCGVKQEQRTGVDAVMHFGTLSREDLEIGYTVDCSC. Residues His1828 and Asp1842 each act as for PL2-PRO activity in the active site. Residues 1906 to 2007 enclose the Nucleic acid-binding domain; it reads IKAQFKTFEK…TYFNRPLLVD (102 aa). Residues 2020–2169 form the G2M domain; sequence DDGGDISESD…ADNKVIYTTE (150 aa). 3 consecutive transmembrane segments (helical) span residues 2138-2158, 2199-2219, and 2221-2241; these read ISACFNFIKWLFVLLFGWIKI, ACIIATIFLLWFNFIYANVIF, and DFYLPKIGFLPTFVGKIVQWI. An HD1 region spans residues 2138 to 2385; that stretch reads ISACFNFIKW…ASFIKLFSLF (248 aa). In terms of domain architecture, 3Ecto spans 2235-2296; sequence GKIVQWIKNT…AIDVVQYEAD (62 aa). Intrachain disulfides connect Cys2251/Cys2275 and Cys2266/Cys2272. A run of 3 helical transmembrane segments spans residues 2313–2333, 2343–2363, and 2365–2385; these read LIVSYALYTAWFYPLFALISI, LLMLSTLHWSVRLLVSLANML, and AHVFMRFYIIIASFIKLFSLF. The Y1 stretch occupies residues 2383 to 2473; it reads SLFRHVAYGC…ELKRPIQPTD (91 aa). The CoV Nsp3 Y domain occupies 2383-2750; the sequence is SLFRHVAYGC…LTTPFSLKGG (368 aa). Zn(2+) is bound by residues His2387, Cys2392, Cys2397, Cys2400, Cys2433, His2436, Cys2440, and Cys2443. Residues 2387–2400 form a ZF1 region; it reads HVAYGCSKSGCLFC. Residues 2433–2443 are ZF2; sequence CSKHQWNCIDC. The tract at residues 2474–2566 is Y2; that stretch reads VAYHTVTDVK…MVDKILITTA (93 aa). Residues 2474–2750 are coV-Y; the sequence is VAYHTVTDVK…LTTPFSLKGG (277 aa). Positions 2567–2649 are Y3; the sequence is NTGTSVTETM…DSVMSAVSAG (83 aa). The Y4 stretch occupies residues 2650–2750; it reads LELTDESCNN…LTTPFSLKGG (101 aa). 7 helical membrane-spanning segments follow: residues 2752–2772, 2824–2844, 3009–3029, 3031–3051, 3063–3083, 3090–3110, and 3115–3135; these read VFSYFVYVCFVLSLVCFIGLW, STFGLSYYSNSMACPIVVAVV, VFDLIYQLFKGLAQPVDFLAL, ASSIAGAILAVIVVLGFYYLI, IVFVNVIVWCVNFMMLFVFQV, VYAICYFYATLYFPSEISVIM, and LVMYGTIMPLWFCLLYISVVV. The HD2 stretch occupies residues 2752-3135; sequence VFSYFVYVCF…FCLLYISVVV (384 aa). Residues 3149 to 3246 enclose the Nsp4C domain; that stretch reads LGTSVRSDGT…TASVSTSFLQ (98 aa). Positions 3247–3549 constitute a Peptidase C30 domain; it reads SGIVKMVNPT…YQQLAGIKLQ (303 aa). Residues His3287 and Cys3391 each act as for 3CL-PRO activity in the active site. The segment at 3319–3775 is HD3; it reads LSLTVMSYQM…IISCYWGLFS (457 aa). The next 7 helical transmembrane spans lie at 3558 to 3578, 3588 to 3608, 3615 to 3635, 3657 to 3677, 3684 to 3704, 3711 to 3731, and 3755 to 3775; these read GIVCWIMASTFLFSCIITAFV, TNMLSITFCALCVISLAMLLV, LTMYIIPVLFTLLYNNYLVVY, TYTDEVIYGMLLLIGMVFVTL, LFSFIMFVGRVISVVSLWYMG, ILLMLASLFGTYTWTTALSMA, and IVLVCYLFIGYIISCYWGLFS. Residues 3837–3925 enclose the RdRp Nsp7 cofactor domain; that stretch reads SKLTDVKCAN…DYAKDNTVLQ (89 aa). The 197-residue stretch at 3926 to 4122 folds into the RdRp Nsp8 cofactor domain; it reads ALQSEFVNMA…HNEVSATVLQ (197 aa). The 110-residue stretch at 4123–4232 folds into the Nsp9 ssRNA-binding domain; that stretch reads NNELMPAKLK…GTISSTVRLQ (110 aa). In terms of domain architecture, ExoN/MTase coactivator spans 4233-4370; the sequence is AGTATEYASN…CVSTDTTVQS (138 aa). Zn(2+)-binding residues include Cys4306, Cys4309, His4315, Cys4322, Cys4348, Cys4351, Cys4359, and Cys4361. 2 zinc fingers span residues 4306 to 4322 and 4348 to 4361; these read CIYCRARVEHPDVDGLC and CQVCGFWRDGSCSC. One can recognise a NiRAN domain in the interval 4375–4630; it reads FLNRVRGTSV…DCELYVNNAY (256 aa). Mn(2+)-binding residues include Asn4578 and Asp4587. The 99-residue stretch at 4631 to 4729 folds into the Nsp12 Interface domain; it reads RLFDLVQYDF…MNMDVDTHRY (99 aa). 5 residues coordinate Zn(2+): His4660, Cys4666, Cys4671, Cys4675, and Cys4852. One can recognise a Nsp12 RNA-dependent RNA polymerase domain in the interval 4730 to 5297; that stretch reads RLSLKDLLLY…NMYLRSAVMQ (568 aa). The interval 4732-4946 is rdRp Fingers N-ter; sequence SLKDLLLYAA…HQKCLKSIAA (215 aa). The interval 4947-4985 is rdRp Palm N-ter; it reads TRGVPVVIGTTKFYGGWDDMLRRLIKDVDNPVLMGWDYP. Residues 4977–5139 enclose the RdRp catalytic domain; it reads PVLMGWDYPK…CYNSDYASKG (163 aa). The interval 4986–5044 is rdRp Fingers C-ter; the sequence is KCDRAMPNILRIVSSLVLARKHEACCSQSDRFYRLANECAQVLSEIVMCGGCYYVKPGG. Zn(2+)-binding residues include His5007, Cys5010, and Cys5011. The interval 5045–5180 is rdRp Palm C-ter; the sequence is TSSGDATTAF…NNGPHEFCSQ (136 aa). Active-site residues include Ser5124, Asp5125, and Asp5126. The interval 5181 to 5297 is rdRp Thumb; the sequence is HTMLVKMDGD…NMYLRSAVMQ (117 aa). The 113-residue stretch at 5298 to 5410 folds into the CV ZBD domain; sequence SVGACVVCSS…DDFNRIASCK (113 aa). Zn(2+) is bound by residues Cys5302, Cys5305, Cys5313, Cys5316, Cys5323, Cys5326, His5330, His5336, Cys5347, Cys5352, Cys5369, and His5372. The region spanning 5553–5734 is the (+)RNA virus helicase ATP-binding domain; sequence SVLETFQNNV…MCCLGPDIFL (182 aa). 5578 to 5585 contacts ATP; it reads GPPGTGKS. Residues 5735–5904 enclose the (+)RNA virus helicase C-terminal domain; the sequence is GTCYRCPKEI…VETRVQCSTN (170 aa). Positions 5971 to 6186 constitute an ExoN domain; that stretch reads LFITKEEAVK…RCLAVYDCFC (216 aa). Residues Asp5989, Glu5991, and Glu6090 contribute to the active site. Zn(2+) contacts are provided by His6156, Cys6160, and His6163. Residues His6167 and Asp6172 contribute to the active site. Position 6178 (Cys6178) interacts with Zn(2+). The 227-residue stretch at 6195–6421 folds into the N7-MTase domain; that stretch reads YPIISNELSI…NLWNTFTKLQ (227 aa). S-adenosyl-L-methionine is bound at residue 6230–6236; the sequence is DIGNPKA. The interval 6308–6322 is gpppA-binding; sequence CNGGSLYVNKHAFHT. Residues Cys6346, Cys6367, Cys6378, and His6381 each contribute to the Zn(2+) site. The Nsp15 N-terminal oligomerization domain maps to 6422–6482; the sequence is SLENVVYNLV…NVAVELFAKR (61 aa). Positions 6483–6603 constitute an AV-Nsp11N/CoV-Nsp15M domain; the sequence is SIRHHPELKL…FAVRKEGQDV (121 aa). The region spanning 6653–6792 is the NendoU domain; sequence TCRTDMEKDF…NDEKVMTFYP (140 aa). Active-site residues include His6683, His6698, Lys6738, Lys6841, Asp6935, Lys6971, and Glu7004. The 263-residue stretch at 6797 to 7059 folds into the Nidovirus-type SAM-dependent 2'-O-MTase domain; it reads ASDWKPGYSM…NSRLSWLVMP (263 aa).

The protein belongs to the coronaviruses polyprotein 1ab family. In terms of assembly, interacts with host PHB and PHB2. As to quaternary structure, interacts with papain-like protease nsp3 and non-structural protein 6. Monomer. Homodimer. Only the homodimer shows catalytic activity. In terms of assembly, interacts with nsp8 and nsp12 to form the replication-transcription complex (RTC): nsp12, nsp7, two subunits of nsp8, and up to two subunits of nsp13. As to quaternary structure, interacts with nsp7, nsp13 and nsp12 to form the replication-transcription complex (RTC): nsp12, nsp7, two subunits of nsp8, and up to two subunits of nsp13. Interacts with nsp12. In terms of assembly, interacts with proofreading exoribonuclease nsp14 and 2'-O-methyltransferase nsp16; these interactions enhance nsp14 and nsp16 enzymatic activities. As to quaternary structure, interacts with nsp7 and nsp8 to form the replication-transcription complex (RTC): nsp12, nsp7, two subunits of nsp8, and up to two subunits of nsp13. Interacts with nsp9. Interacts with nsp8 to form the replication-transcription complex (RTC): nsp12, nsp7, two subunits of nsp8, and up to two subunits of nsp13. Mn(2+) serves as cofactor. Mg(2+) is required as a cofactor. Post-translationally, specific enzymatic cleavages in vivo by its own proteases yield mature proteins. 3CL-PRO and PL-PRO proteinases are autocatalytically processed.

The protein resides in the host membrane. Its subcellular location is the host cytoplasm. It localises to the host perinuclear region. The protein localises to the host endoplasmic reticulum-Golgi intermediate compartment. It carries out the reaction RNA(n) + a ribonucleoside 5'-triphosphate = RNA(n+1) + diphosphate. It catalyses the reaction ATP + H2O = ADP + phosphate + H(+). The catalysed reaction is Thiol-dependent hydrolysis of ester, thioester, amide, peptide and isopeptide bonds formed by the C-terminal Gly of ubiquitin (a 76-residue protein attached to proteins as an intracellular targeting signal).. The enzyme catalyses a 5'-end (N(7)-methyl 5'-triphosphoguanosine)-ribonucleoside in mRNA + S-adenosyl-L-methionine = a 5'-end (N(7)-methyl 5'-triphosphoguanosine)-(2'-O-methyl-ribonucleoside) in mRNA + S-adenosyl-L-homocysteine + H(+). It carries out the reaction uridylyl-uridylyl-ribonucleotide-RNA = a 3'-end uridylyl-2',3'-cyclophospho-uridine-RNA + a 5'-end dephospho-ribonucleoside-RNA. It catalyses the reaction a 5'-end diphospho-ribonucleoside in mRNA + GTP + H(+) = a 5'-end (5'-triphosphoguanosine)-ribonucleoside in mRNA + diphosphate. The catalysed reaction is a 5'-end (5'-triphosphoguanosine)-ribonucleoside in mRNA + S-adenosyl-L-methionine = a 5'-end (N(7)-methyl 5'-triphosphoguanosine)-ribonucleoside in mRNA + S-adenosyl-L-homocysteine. Its function is as follows. The replicase polyprotein of coronaviruses is a multifunctional protein: it contains the activities necessary for the transcription of negative stranded RNA, leader RNA, subgenomic mRNAs and progeny virion RNA as well as proteinases responsible for the cleavage of the polyprotein into functional products. In terms of biological role, inhibits host translation by interacting with the 40S ribosomal subunit. The nsp1-40S ribosome complex further induces an endonucleolytic cleavage near the 5'UTR of host mRNAs, targeting them for degradation. Viral mRNAs are not susceptible to nsp1-mediated endonucleolytic RNA cleavage thanks to the presence of a 5'-end leader sequence and are therefore protected from degradation. By suppressing host gene expression, nsp1 facilitates efficient viral gene expression in infected cells and evasion from host immune response. May play a role in the modulation of host cell survival signaling pathway by interacting with host PHB and PHB2. Indeed, these two proteins play a role in maintaining the functional integrity of the mitochondria and protecting cells from various stresses. Functionally, responsible for the cleavages located at the N-terminus of the replicase polyprotein. In addition, PL-PRO possesses a deubiquitinating/deISGylating activity and processes both 'Lys-48'- and 'Lys-63'-linked polyubiquitin chains from cellular substrates. Participates together with nsp4 in the assembly of virally-induced cytoplasmic double-membrane vesicles necessary for viral replication. Antagonizes innate immune induction of type I interferon by blocking the phosphorylation, dimerization and subsequent nuclear translocation of host IRF3. Also prevents host NF-kappa-B signaling. Its function is as follows. Participates in the assembly of virally-induced cytoplasmic double-membrane vesicles necessary for viral replication. In terms of biological role, cleaves the C-terminus of replicase polyprotein at 11 sites. Recognizes substrates containing the core sequence [ILMVF]-Q-|-[SGACN]. Also able to bind an ADP-ribose-1''-phosphate (ADRP). Plays a role in the initial induction of autophagosomes from host endoplasmic reticulum. Later, limits the expansion of these phagosomes that are no longer able to deliver viral components to lysosomes. Functionally, forms a hexadecamer with nsp8 (8 subunits of each) that may participate in viral replication by acting as a primase. Alternatively, may synthesize substantially longer products than oligonucleotide primers. Its function is as follows. Forms a hexadecamer with nsp7 (8 subunits of each) that may participate in viral replication by acting as a primase. Alternatively, may synthesize substantially longer products than oligonucleotide primers. In terms of biological role, forms a primer, NSP9-pU, which is utilized by the polymerase for the initiation of RNA chains. Interacts with ribosome signal recognition particle RNA (SRP). Together with NSP8, suppress protein integration into the cell membrane, thereby disrupting host immune defenses. Plays a pivotal role in viral transcription by stimulating both nsp14 3'-5' exoribonuclease and nsp16 2'-O-methyltransferase activities. Therefore plays an essential role in viral mRNAs cap methylation. Functionally, RNA-directed RNA polymerase that catalyzes the transcription of viral genomic and subgenomic RNAs. Acts in complex with nsp7 and nsp8 to transcribe both the minus and positive strands of genomic RNA. The kinase-like NiRAN domain of NSP12 attaches one or more nucleotides to the amino terminus of NSP9, forming a covalent RNA-protein intermediate that serves as transcription/replication primer. Subgenomic RNAs (sgRNAs) are formed by discontinuous transcription: The polymerase has the ability to pause at transcription-regulating sequences (TRS) and jump to the leader TRS, resulting in a major deletion. This creates a series of subgenomic RNAs that are replicated, transcribed and translated. In addition, Nsp12 is a subunit of the viral RNA capping enzyme that catalyzes the RNA guanylyltransferase reaction for genomic and sub-genomic RNAs. Subsequently, the NiRAN domain transfers RNA to GDP, and forms the core cap structure GpppA-RNA. Its function is as follows. Multi-functional protein with a zinc-binding domain in N-terminus displaying RNA and DNA duplex-unwinding activities with 5' to 3' polarity. Activity of helicase is dependent on magnesium. In terms of biological role, plays a role in viral RNA synthesis through two distinct activities. The N7-guanine methyltransferase activity plays a role in the formation of the cap structure GpppA-RNA. The proofreading exoribonuclease reduces the sensitivity of the virus to RNA mutagens during replication. This activity acts on both ssRNA and dsRNA in a 3'-5' direction. Plays a role in viral transcription/replication and prevents the simultaneous activation of host cell dsRNA sensors, such as MDA5/IFIH1, OAS, and PKR. Acts by degrading the 5'-polyuridines generated during replication of the poly(A) region of viral genomic and subgenomic RNAs. Catalyzes a two-step reaction in which a 2'3'-cyclic phosphate (2'3'-cP) is first generated by 2'-O transesterification, which is then hydrolyzed to a 3'-phosphate (3'-P). If not degraded, poly(U) RNA would hybridize with poly(A) RNA tails and activate host dsRNA sensors. Functionally, methyltransferase that mediates mRNA cap 2'-O-ribose methylation to the 5'-cap structure of viral mRNAs. N7-methyl guanosine cap is a prerequisite for binding of nsp16. Therefore plays an essential role in viral mRNAs cap methylation which is essential to evade immune system. This is Replicase polyprotein 1ab (rep) from Bos taurus (Bovine).